The chain runs to 176 residues: ATP-dependent protease subunit HslV (176 aa).

Thr-5 is an active-site residue. 3 residues coordinate Na(+): Ala-161, Cys-164, and Thr-167.

This sequence belongs to the peptidase T1B family. HslV subfamily. As to quaternary structure, a double ring-shaped homohexamer of HslV is capped on each side by a ring-shaped HslU homohexamer. The assembly of the HslU/HslV complex is dependent on binding of ATP.

It is found in the cytoplasm. The catalysed reaction is ATP-dependent cleavage of peptide bonds with broad specificity.. With respect to regulation, allosterically activated by HslU binding. Protease subunit of a proteasome-like degradation complex believed to be a general protein degrading machinery. In Caldicellulosiruptor bescii (strain ATCC BAA-1888 / DSM 6725 / KCTC 15123 / Z-1320) (Anaerocellum thermophilum), this protein is ATP-dependent protease subunit HslV.